Here is a 177-residue protein sequence, read N- to C-terminus: Large ribosomal subunit protein uL6 (177 aa).

Belongs to the universal ribosomal protein uL6 family. In terms of assembly, part of the 50S ribosomal subunit.

This protein binds to the 23S rRNA, and is important in its secondary structure. It is located near the subunit interface in the base of the L7/L12 stalk, and near the tRNA binding site of the peptidyltransferase center. This Pseudomonas fluorescens (strain SBW25) protein is Large ribosomal subunit protein uL6.